A 195-amino-acid polypeptide reads, in one-letter code: Orotate phosphoribosyltransferase (195 aa).

117-125 provides a ligand contact to 5-phospho-alpha-D-ribose 1-diphosphate; the sequence is EDITTTGGS. Residues Thr-121 and Arg-149 each contribute to the orotate site.

Belongs to the purine/pyrimidine phosphoribosyltransferase family. PyrE subfamily. In terms of assembly, homodimer. The cofactor is Mg(2+).

It carries out the reaction orotidine 5'-phosphate + diphosphate = orotate + 5-phospho-alpha-D-ribose 1-diphosphate. The protein operates within pyrimidine metabolism; UMP biosynthesis via de novo pathway; UMP from orotate: step 1/2. Functionally, catalyzes the transfer of a ribosyl phosphate group from 5-phosphoribose 1-diphosphate to orotate, leading to the formation of orotidine monophosphate (OMP). The polypeptide is Orotate phosphoribosyltransferase (Acidithiobacillus ferrooxidans (strain ATCC 53993 / BNL-5-31) (Leptospirillum ferrooxidans (ATCC 53993))).